Reading from the N-terminus, the 299-residue chain is Non-structural protein V (299 aa).

The disordered stretch occupies residues 40-98 (SDNPGQEQATCKEEEAGASGLSKPCLSAIGSTEGGAPRIRGQGSGESDDDTETLGFPSR). The interaction with host STAT1 stretch occupies residues 110-120 (YYVYDHSGEAV). Residues 134 to 145 (GLDGDSTLSGGD) are compositionally biased toward low complexity. Disordered regions lie at residues 134–174 (GLDG…APIS) and 204–230 (PKLG…PIKK). Acidic residues predominate over residues 146–160 (NESENSDVDIGEPDT). The Zn(2+) site is built by His-232, Cys-251, Cys-255, Cys-267, Cys-269, Cys-272, Cys-276, and Cys-279.

The protein belongs to the paramyxoviruses V protein family. In terms of assembly, interacts with host IFIH1/MDA5 and DHX58/LGP2; these interactions are involved in the inhibition of the host type I interferon signaling pathway. Interacts with host TYK2; this interaction inhibits the type I interferon signaling pathway without affecting the type II pathway. Interacts with host IRF7; this interaction inhibits IRF7 translocation to the nucleus. Interacts with host CHUK. Interacts with host RELA/p65; this interaction inhibits the nuclear translocation of NF-KappaB. Interacts (via N-terminus) with host STAT1 and JAK1; these interactions inhibit STAT1 phosphorylation by Jak1 and thereby the type I interferon signaling pathway. Interacts (via C-terminus) with host STAT2; this interaction is involved in the inhibition of the host type I interferon signaling pathway. Forms a complex with host PPP1CA and PPP1CC; this interaction prevents dephosphorylation of host IFIH1/MDA5 and leads to the inhibition of the host type I interferon signaling pathway. Interacts with host IRF9; this interaction prevents the binding of IRF9 to STAT2 and thereby the type I interferon signaling pathway. Interacts with host RIGI regulatory protein (via CARDs domain) and host TRIM25 (via SPRY domain); these interactions prevent TRIM25-mediated ubiquitination of RIG-I and disrupts downstream RIG-I signaling.

Its subcellular location is the host cytoplasm. Plays an essential role in the inhibition of host immune response. Prevents the establishment of cellular antiviral state by blocking interferon-alpha/beta (IFN-alpha/beta) production and signaling pathway. Interacts with host IFIH1/MDA5 and DHX58/LGP2 to inhibit the transduction pathway involved in the activation of IFN-beta promoter, thus protecting the virus against cell antiviral state. Blocks the type I interferon signaling pathway by interacting with host TYK2 and thereby inhibiting downstream STAT1 and STAT2 phosphorylation. Blocks the type I interferon signaling pathway by disrupting the RIG-I signaling pathway. Moderately affects the type II interferon signaling. Prevents PP1alpha/gamma-mediated dephosphorylation of host IFIH1/MDA5 and thus blocks its activation. In Measles virus (strain IP-3-Ca) (MeV), this protein is Non-structural protein V (P/V).